A 215-amino-acid polypeptide reads, in one-letter code: Pyridoxine/pyridoxamine 5'-phosphate oxidase (215 aa).

Substrate-binding positions include 9–12 and K69; that span reads RRDY. Residues 64–69, 79–80, K86, and Q108 contribute to the FMN site; these read RVLLLK and FT. The substrate site is built by Y126, R130, and S134. FMN contacts are provided by residues 143–144 and W188; that span reads QS. 194-196 is a binding site for substrate; the sequence is RLH. R198 contacts FMN.

Belongs to the pyridoxamine 5'-phosphate oxidase family. In terms of assembly, homodimer. It depends on FMN as a cofactor.

The catalysed reaction is pyridoxamine 5'-phosphate + O2 + H2O = pyridoxal 5'-phosphate + H2O2 + NH4(+). It catalyses the reaction pyridoxine 5'-phosphate + O2 = pyridoxal 5'-phosphate + H2O2. It functions in the pathway cofactor metabolism; pyridoxal 5'-phosphate salvage; pyridoxal 5'-phosphate from pyridoxamine 5'-phosphate: step 1/1. The protein operates within cofactor metabolism; pyridoxal 5'-phosphate salvage; pyridoxal 5'-phosphate from pyridoxine 5'-phosphate: step 1/1. In terms of biological role, catalyzes the oxidation of either pyridoxine 5'-phosphate (PNP) or pyridoxamine 5'-phosphate (PMP) into pyridoxal 5'-phosphate (PLP). This is Pyridoxine/pyridoxamine 5'-phosphate oxidase from Pseudomonas entomophila (strain L48).